A 769-amino-acid chain; its full sequence is Neprilysin-21 (769 aa).

At Met1–Thr26 the chain is on the cytoplasmic side. The chain crosses the membrane as a helical; Signal-anchor for type II membrane protein span at residues Leu27–Leu47. Over Trp48–Trp769 the chain is Extracellular. N-linked (GlcNAc...) asparagine glycosylation is present at Asn69. The Peptidase M13 domain occupies Val85–Trp769. Disulfide bonds link Cys86–Cys91, Cys109–Cys754, Cys117–Cys714, Cys173–Cys428, and Cys638–Cys766. Residues Asn221, Asn240, Asn272, Asn307, Asn356, Asn412, and Asn506 are each glycosylated (N-linked (GlcNAc...) asparagine). Residue His601 coordinates Zn(2+). The active site involves Glu602. The Zn(2+) site is built by His605 and Glu663. Catalysis depends on Asp667, which acts as the Proton donor. Residues Asn684 and Asn698 are each glycosylated (N-linked (GlcNAc...) asparagine).

Belongs to the peptidase M13 family. It depends on Zn(2+) as a cofactor.

It localises to the cell membrane. Functionally, probable cell surface protease. In Caenorhabditis elegans, this protein is Neprilysin-21 (nep-21).